A 256-amino-acid chain; its full sequence is MRNSPVSPGPGYAPSRGAARTRKRGVARWLAYAGGVFAGAWLATQLYYVAQIAAWSVIDPGSSAFMRADAWRLSNAQPAVPIRHRWVPYDKISRNLKRAVIASEDADFANNSGYEVDAILQAWEKNRARGRIVSGGSTITQQLARNLFLSGERSYIRKGQELIITWMLETLLDKERIFEIYLNSVEFGRGVYGAEAAAQYYYRIPASRLSAWQSARLAVMLPNPKYFDAHRSSPYLAQRASVIARRMGAAELPASQ.

The chain crosses the membrane as a helical span at residues 26–48; that stretch reads VARWLAYAGGVFAGAWLATQLYY.

This sequence belongs to the glycosyltransferase 51 family.

The protein localises to the cell inner membrane. The enzyme catalyses [GlcNAc-(1-&gt;4)-Mur2Ac(oyl-L-Ala-gamma-D-Glu-L-Lys-D-Ala-D-Ala)](n)-di-trans,octa-cis-undecaprenyl diphosphate + beta-D-GlcNAc-(1-&gt;4)-Mur2Ac(oyl-L-Ala-gamma-D-Glu-L-Lys-D-Ala-D-Ala)-di-trans,octa-cis-undecaprenyl diphosphate = [GlcNAc-(1-&gt;4)-Mur2Ac(oyl-L-Ala-gamma-D-Glu-L-Lys-D-Ala-D-Ala)](n+1)-di-trans,octa-cis-undecaprenyl diphosphate + di-trans,octa-cis-undecaprenyl diphosphate + H(+). The protein operates within cell wall biogenesis; peptidoglycan biosynthesis. In terms of biological role, peptidoglycan polymerase that catalyzes glycan chain elongation from lipid-linked precursors. The sequence is that of Biosynthetic peptidoglycan transglycosylase from Burkholderia thailandensis (strain ATCC 700388 / DSM 13276 / CCUG 48851 / CIP 106301 / E264).